We begin with the raw amino-acid sequence, 151 residues long: C-C motif chemokine 25 (151 aa).

Positions 1–23 are cleaved as a signal peptide; that stretch reads MRPWLLACLVACFVGAWAPAIHA. 2 disulfide bridges follow: cysteine 30–cysteine 58 and cysteine 31–cysteine 75. The tract at residues 93 to 151 is disordered; the sequence is RNKKDSKPHHSGRRFFQGPQSGVRKLSSGTSRPLLLKFSGPTRSSKRKASLLTTAIPGP.

This sequence belongs to the intercrine beta (chemokine CC) family.

The protein localises to the secreted. Functionally, potentially involved in T-cell development. Recombinant protein shows chemotactic activity on thymocytes, macrophages, THP-1 cells, and dendritics cells but is inactive on peripheral blood lymphocytes and neutrophils. Binds to CCR9. Binds to atypical chemokine receptor ACKR4 and mediates the recruitment of beta-arrestin (ARRB1/2) to ACKR4. This is C-C motif chemokine 25 (CCL25) from Sus scrofa (Pig).